The following is a 205-amino-acid chain: High frequency lysogenization protein HflD homolog (205 aa).

Belongs to the HflD family.

The protein resides in the cytoplasm. It is found in the cell inner membrane. The polypeptide is High frequency lysogenization protein HflD homolog (Vibrio campbellii (strain ATCC BAA-1116)).